The following is a 36-amino-acid chain: Potassium channel toxin alpha-KTx 1.9 (36 aa).

It belongs to the short scorpion toxin superfamily. Potassium channel inhibitor family. Alpha-KTx 01 subfamily. As to expression, expressed by the venom gland.

It is found in the secreted. Its function is as follows. Potent selective inhibitor of Kv1/KCNA voltage-gated potassium channels. In Centruroides limbatus (Bark scorpion), this protein is Potassium channel toxin alpha-KTx 1.9.